The chain runs to 146 residues: Superoxide dismutase [Mn] 2 (146 aa).

3 residues coordinate Mn(2+): His42, Asp126, and His130.

Belongs to the iron/manganese superoxide dismutase family. Requires Mn(2+) as cofactor.

The catalysed reaction is 2 superoxide + 2 H(+) = H2O2 + O2. Destroys superoxide anion radicals which are normally produced within the cells and which are toxic to biological systems. This Haloferax mediterranei (Halobacterium mediterranei) protein is Superoxide dismutase [Mn] 2 (sod2).